Consider the following 210-residue polypeptide: Ribulose-phosphate 3-epimerase (210 aa).

A substrate-binding site is contributed by Ser9. Residues His34, Asp36, and His68 each coordinate a divalent metal cation. Asp36 serves as the catalytic Proton acceptor. Residues His68, 144 to 147, 177 to 179, and 199 to 200 contribute to the substrate site; these read GFGG, DGG, and GS. Asp177 contributes to the a divalent metal cation binding site. Residue Asp177 is the Proton donor of the active site.

This sequence belongs to the ribulose-phosphate 3-epimerase family. Requires a divalent metal cation as cofactor.

The enzyme catalyses D-ribulose 5-phosphate = D-xylulose 5-phosphate. It participates in carbohydrate degradation. Its function is as follows. Catalyzes the reversible epimerization of D-ribulose 5-phosphate to D-xylulose 5-phosphate. The sequence is that of Ribulose-phosphate 3-epimerase from Serratia marcescens.